We begin with the raw amino-acid sequence, 555 residues long: Meiotic mRNA stability protein kinase SSN3 (555 aa).

The Protein kinase domain occupies 75 to 463 (YEVIGYIAAG…AFNALEHKYF (389 aa)). 81–89 (IAAGTYGKV) contacts ATP. Residues 100–138 (TNSANGSSLNGTNAKIPQFDSTQPKSSSSMDMQANTNAL) show a composition bias toward polar residues. The tract at residues 100 to 166 (TNSANGSSLN…REDVSPHYNS (67 aa)) is disordered. Lys183 is a binding site for ATP. The active-site Proton acceptor is the Asp286.

It belongs to the protein kinase superfamily. CMGC Ser/Thr protein kinase family. CDC2/CDKX subfamily. In terms of assembly, component of the SRB8-11 complex which consists of SRB8, SSN2/SRB9, SSN3/SRB10 and SSN8/SRB11. The SRB8-11 complex associates with the Mediator complex. The SSN3/SRB10 and SSN8/SRB11 kinase-cyclin pair also associate with the RNA polymerase II holoenzyme. Interacts with TUP1.

Its subcellular location is the nucleus. The enzyme catalyses L-seryl-[protein] + ATP = O-phospho-L-seryl-[protein] + ADP + H(+). It catalyses the reaction L-threonyl-[protein] + ATP = O-phospho-L-threonyl-[protein] + ADP + H(+). It carries out the reaction [DNA-directed RNA polymerase] + ATP = phospho-[DNA-directed RNA polymerase] + ADP + H(+). Component of the SRB8-11 complex. The SRB8-11 complex is a regulatory module of the Mediator complex which is itself involved in regulation of basal and activated RNA polymerase II-dependent transcription. The SRB8-11 complex may be involved in the transcriptional repression of a subset of genes regulated by Mediator. It may inhibit the association of the Mediator complex with RNA polymerase II to form the holoenzyme complex. The SRB8-11 complex phosphorylates the C-terminal domain (CTD) of the largest subunit of RNA polymerase II RPB1 at serines 2 and 5. The SSN3/SRB10 and SSN8/SRB11 kinase-cyclin pair may also positively and negatively regulate numerous transcriptional activators in response to changes in nutritional and physiological conditions. Phosphorylates GCN4, promoting its ubiquitin-mediated degradation, and MSN2, promoting its nuclear exclusion. Phosphorylates STE12, thereby promoting its degradation and inhibition of filamentous growth. Phosphorylates GAL4, and this phosphorylation is required for efficient galactose-inducible transcription. Also phosphorylates BDF1 and the TAF2 subunit of the TFIID complex. In Saccharomyces cerevisiae (strain ATCC 204508 / S288c) (Baker's yeast), this protein is Meiotic mRNA stability protein kinase SSN3 (SSN3).